Consider the following 201-residue polypeptide: Receptor expression-enhancing protein 6 (201 aa).

The next 3 membrane-spanning stretches (helical) occupy residues 36-56, 89-109, and 117-137; these read LAAG…GASL, WVVY…LFWF, and CAFL…LLYH.

Belongs to the DP1 family. As to quaternary structure, interacts with STX3. Interacts with clathrin. In terms of tissue distribution, expressed in the inner segment of rod photoreceptors and outer plexiform layer of the retina (at protein level). Expressed in liver, but not detected in brain, muscle, kidney, retinal cone photoreceptors or retinal ganglion cells (at protein level). Highly expressed in the ganglion cell layer of the retina and in liver, and also detected at low levels in kidney and testis. Isoform 1: Expressed in the retina. Isoform 2: Expressed in liver.

It localises to the endoplasmic reticulum membrane. The protein localises to the cytoplasmic vesicle. The protein resides in the clathrin-coated vesicle membrane. Functionally, required for correct function and survival of retinal photoreceptors. Required for retinal development. In rod photoreceptors, facilitates stability and/or trafficking of guanylate cyclases and is required to maintain endoplasmic reticulum and mitochondrial homeostasis. May play a role in clathrin-coated intracellular vesicle trafficking of proteins from the endoplasmic reticulum to the retinal rod plasma membrane. The protein is Receptor expression-enhancing protein 6 (Reep6) of Mus musculus (Mouse).